Consider the following 74-residue polypeptide: Small ribosomal subunit protein bS18 (74 aa).

The protein belongs to the bacterial ribosomal protein bS18 family. As to quaternary structure, part of the 30S ribosomal subunit. Forms a tight heterodimer with protein bS6.

Functionally, binds as a heterodimer with protein bS6 to the central domain of the 16S rRNA, where it helps stabilize the platform of the 30S subunit. This is Small ribosomal subunit protein bS18 from Alkalilimnicola ehrlichii (strain ATCC BAA-1101 / DSM 17681 / MLHE-1).